The sequence spans 941 residues: Pre-mRNA-processing factor 6 (941 aa).

Residues 1–79 (MNKKKKPFLG…DEDLNDTNYD (79 aa)) form a disordered region. Residues 39-65 (DANDPVDDRHAPPGKRTVGDQMKKNQA) show a composition bias toward basic and acidic residues. Positions 66–78 (ADDDDEDLNDTNY) are enriched in acidic residues. A Phosphoserine modification is found at serine 143. Threonine 180, threonine 266, and threonine 275 each carry phosphothreonine. Residue serine 279 is modified to Phosphoserine. HAT repeat units lie at residues 384–416 (TDIR…LEEP), 418–444 (DARI…ARLE), 445–476 (TYEN…LEEA), 554–586 (NALE…FEKN), 588–620 (GTRE…SKWL), 622–654 (GDVP…LESE), 689–721 (GNIT…IEEQ), 723–755 (ELME…LEEK), and 855–887 (RKIT…FELQ).

In terms of assembly, identified in the spliceosome B complex. Identified in the spliceosome C complex. Associates with the U5 snRNP particle. Component of the U4/U6-U5 tri-snRNP complex composed of the U4, U6 and U5 snRNAs and at least PRPF3, PRPF4, PRPF6, PRPF8, PRPF31, SNRNP200, TXNL4A, SNRNP40, DDX23, CD2BP2, PPIH, SNU13, EFTUD2, SART1 and USP39, LSm proteins LSm2-8 and Sm proteins. Interacts with ARAF1. Interacts with AR and NR3C1, but not ESR1, independently of the presence of hormones. Interacts with USH1G. Post-translationally, phosphorylated by PRP4K during spliceosome assembly.

Its subcellular location is the nucleus. It is found in the nucleoplasm. The protein localises to the nucleus speckle. Functionally, involved in pre-mRNA splicing as component of the U4/U6-U5 tri-snRNP complex, one of the building blocks of the spliceosome. Enhances dihydrotestosterone-induced transactivation activity of AR, as well as dexamethasone-induced transactivation activity of NR3C1, but does not affect estrogen-induced transactivation. The chain is Pre-mRNA-processing factor 6 (Prpf6) from Rattus norvegicus (Rat).